The primary structure comprises 123 residues: Small ribosomal subunit protein uS13 (123 aa).

Positions 94–123 (RRGLPVRGQHTKNNARTRKGPARAIAGKKK) are disordered.

This sequence belongs to the universal ribosomal protein uS13 family. Part of the 30S ribosomal subunit. Forms a loose heterodimer with protein S19. Forms two bridges to the 50S subunit in the 70S ribosome.

Functionally, located at the top of the head of the 30S subunit, it contacts several helices of the 16S rRNA. In the 70S ribosome it contacts the 23S rRNA (bridge B1a) and protein L5 of the 50S subunit (bridge B1b), connecting the 2 subunits; these bridges are implicated in subunit movement. Contacts the tRNAs in the A and P-sites. The sequence is that of Small ribosomal subunit protein uS13 from Oenococcus oeni (strain ATCC BAA-331 / PSU-1).